Consider the following 215-residue polypeptide: UPF0502 protein Gbem_0102 (215 aa).

This sequence belongs to the UPF0502 family.

The chain is UPF0502 protein Gbem_0102 from Citrifermentans bemidjiense (strain ATCC BAA-1014 / DSM 16622 / JCM 12645 / Bem) (Geobacter bemidjiensis).